Consider the following 301-residue polypeptide: Probable serine acetyltransferase 3 (301 aa).

The segment at 280–301 (IGKKAEPQRELPGVTMEQRWSD) is disordered.

It belongs to the transferase hexapeptide repeat family. Homomultimer.

The catalysed reaction is L-serine + acetyl-CoA = O-acetyl-L-serine + CoA. The protein operates within amino-acid biosynthesis; L-cysteine biosynthesis; L-cysteine from L-serine: step 1/2. This is Probable serine acetyltransferase 3 (SAT3) from Oryza sativa subsp. japonica (Rice).